The sequence spans 282 residues: Bis(5'-nucleosyl)-tetraphosphatase, symmetrical (282 aa).

Belongs to the Ap4A hydrolase family.

The enzyme catalyses P(1),P(4)-bis(5'-adenosyl) tetraphosphate + H2O = 2 ADP + 2 H(+). In terms of biological role, hydrolyzes diadenosine 5',5'''-P1,P4-tetraphosphate to yield ADP. The protein is Bis(5'-nucleosyl)-tetraphosphatase, symmetrical of Burkholderia mallei (strain NCTC 10247).